A 577-amino-acid chain; its full sequence is Sulfite reductase [NADPH] hemoprotein beta-component 2 (577 aa).

4 residues coordinate [4Fe-4S] cluster: cysteine 441, cysteine 447, cysteine 486, and cysteine 490. Cysteine 490 lines the siroheme pocket.

This sequence belongs to the nitrite and sulfite reductase 4Fe-4S domain family. Alpha(8)-beta(8). The alpha component is a flavoprotein, the beta component is a hemoprotein. It depends on siroheme as a cofactor. [4Fe-4S] cluster serves as cofactor.

The enzyme catalyses hydrogen sulfide + 3 NADP(+) + 3 H2O = sulfite + 3 NADPH + 4 H(+). It functions in the pathway sulfur metabolism; hydrogen sulfide biosynthesis; hydrogen sulfide from sulfite (NADPH route): step 1/1. Component of the sulfite reductase complex that catalyzes the 6-electron reduction of sulfite to sulfide. This is one of several activities required for the biosynthesis of L-cysteine from sulfate. This chain is Sulfite reductase [NADPH] hemoprotein beta-component 2, found in Pectobacterium carotovorum subsp. carotovorum (strain PC1).